The primary structure comprises 772 residues: Probable adenosine deaminase (772 aa).

Zn(2+) is bound by residues His22 and His24. Substrate is bound by residues His24, Asp26, and Gly180. His207 is a binding site for Zn(2+). The active-site Proton donor is the Glu210. Asp288 provides a ligand contact to Zn(2+).

It belongs to the metallo-dependent hydrolases superfamily. Adenosine and AMP deaminases family. It depends on Zn(2+) as a cofactor.

The catalysed reaction is adenosine + H2O + H(+) = inosine + NH4(+). Functionally, catalyzes the hydrolytic deamination of adenosine. Plays an important role in purine metabolism and in adenosine homeostasis, and may thereby contribute to cellular signaling events. This Dictyostelium discoideum (Social amoeba) protein is Probable adenosine deaminase (ada).